The sequence spans 206 residues: Small ribosomal subunit protein uS4 (206 aa).

Residues 96–156 (GRLDNVVYRM…EKAKKQARIK (61 aa)) form the S4 RNA-binding domain.

The protein belongs to the universal ribosomal protein uS4 family. Part of the 30S ribosomal subunit. Contacts protein S5. The interaction surface between S4 and S5 is involved in control of translational fidelity.

Its function is as follows. One of the primary rRNA binding proteins, it binds directly to 16S rRNA where it nucleates assembly of the body of the 30S subunit. With S5 and S12 plays an important role in translational accuracy. The polypeptide is Small ribosomal subunit protein uS4 (Aeromonas salmonicida (strain A449)).